The chain runs to 227 residues: PKHD-type hydroxylase Mnod_1077 (227 aa).

The 101-residue stretch at 78–178 folds into the Fe2OG dioxygenase domain; it reads RVLPPLFNRY…RWSAFFWSQS (101 aa). The Fe cation site is built by His96, Asp98, and His159. Arg169 is a 2-oxoglutarate binding site.

Fe(2+) is required as a cofactor. L-ascorbate serves as cofactor.

The sequence is that of PKHD-type hydroxylase Mnod_1077 from Methylobacterium nodulans (strain LMG 21967 / CNCM I-2342 / ORS 2060).